Reading from the N-terminus, the 38-residue chain is Large ribosomal subunit protein bL36 (38 aa).

Belongs to the bacterial ribosomal protein bL36 family.

The sequence is that of Large ribosomal subunit protein bL36 from Anaeromyxobacter dehalogenans (strain 2CP-1 / ATCC BAA-258).